Consider the following 61-residue polypeptide: Small ribosomal subunit protein uS14 (61 aa).

Zn(2+)-binding residues include Cys-24, Cys-27, Cys-40, and Cys-43.

It belongs to the universal ribosomal protein uS14 family. Zinc-binding uS14 subfamily. Part of the 30S ribosomal subunit. Contacts proteins S3 and S10. The cofactor is Zn(2+).

Binds 16S rRNA, required for the assembly of 30S particles and may also be responsible for determining the conformation of the 16S rRNA at the A site. This Endomicrobium trichonymphae protein is Small ribosomal subunit protein uS14.